The sequence spans 271 residues: 3-methyl-2-oxobutanoate hydroxymethyltransferase (271 aa).

Mg(2+) contacts are provided by D53 and D92. 3-methyl-2-oxobutanoate-binding positions include 53–54, D92, and K120; that span reads DS. E122 contacts Mg(2+). The active-site Proton acceptor is E189.

This sequence belongs to the PanB family. Homodecamer; pentamer of dimers. Mg(2+) is required as a cofactor.

It is found in the cytoplasm. It catalyses the reaction 3-methyl-2-oxobutanoate + (6R)-5,10-methylene-5,6,7,8-tetrahydrofolate + H2O = 2-dehydropantoate + (6S)-5,6,7,8-tetrahydrofolate. It functions in the pathway cofactor biosynthesis; (R)-pantothenate biosynthesis; (R)-pantoate from 3-methyl-2-oxobutanoate: step 1/2. Functionally, catalyzes the reversible reaction in which hydroxymethyl group from 5,10-methylenetetrahydrofolate is transferred onto alpha-ketoisovalerate to form ketopantoate. In Burkholderia vietnamiensis (strain G4 / LMG 22486) (Burkholderia cepacia (strain R1808)), this protein is 3-methyl-2-oxobutanoate hydroxymethyltransferase.